A 441-amino-acid chain; its full sequence is Tubulin alpha chain (441 aa).

GTP-binding residues include glutamine 11, glutamate 68, serine 137, glycine 141, threonine 142, threonine 176, asparagine 203, and asparagine 224. Glutamate 68 is a binding site for Mg(2+). The active site involves glutamate 250.

It belongs to the tubulin family. Dimer of alpha and beta chains. A typical microtubule is a hollow water-filled tube with an outer diameter of 25 nm and an inner diameter of 15 nM. Alpha-beta heterodimers associate head-to-tail to form protofilaments running lengthwise along the microtubule wall with the beta-tubulin subunit facing the microtubule plus end conferring a structural polarity. Microtubules usually have 13 protofilaments but different protofilament numbers can be found in some organisms and specialized cells. Mg(2+) serves as cofactor.

The protein resides in the cytoplasm. Its subcellular location is the cytoskeleton. It carries out the reaction GTP + H2O = GDP + phosphate + H(+). In terms of biological role, tubulin is the major constituent of microtubules, a cylinder consisting of laterally associated linear protofilaments composed of alpha- and beta-tubulin heterodimers. Microtubules grow by the addition of GTP-tubulin dimers to the microtubule end, where a stabilizing cap forms. Below the cap, tubulin dimers are in GDP-bound state, owing to GTPase activity of alpha-tubulin. This is Tubulin alpha chain (TUB1) from Encephalitozoon cuniculi (strain GB-M1) (Microsporidian parasite).